Here is a 588-residue protein sequence, read N- to C-terminus: Schlafen family member 12-like (588 aa).

Residues 566-586 (IFLFVCLFRFCLFVCWFVCFF) form a helical membrane-spanning segment.

This sequence belongs to the Schlafen family.

The protein resides in the membrane. This chain is Schlafen family member 12-like (SLFN12L), found in Homo sapiens (Human).